The sequence spans 60 residues: Conotoxin PnMRCL-022 (60 aa).

Residues 1 to 22 form the signal peptide; it reads MRCLPVFVILLLLIASTPSVNA. Residues 23–45 constitute a propeptide that is removed on maturation; that stretch reads RPKTKDLASFHDNAKRTQHIFWS.

The protein belongs to the conotoxin T superfamily. In terms of processing, contains 2 disulfide bonds that can be either 'C1-C3, C2-C4' or 'C1-C4, C2-C3', since these disulfide connectivities have been observed for conotoxins with cysteine framework V (for examples, see AC P0DQQ7 and AC P81755). Expressed by the venom duct.

Its subcellular location is the secreted. The protein is Conotoxin PnMRCL-022 of Conus pennaceus (Feathered cone).